A 1174-amino-acid chain; its full sequence is HEAT repeat-containing protein 6 (1174 aa).

The HEAT 1 repeat unit spans residues 168–207; it reads NELLGPTGILVNLCDPSQPDPELWREAIHCMANLCLGVPG. Disordered regions lie at residues 304 to 346 and 373 to 392; these read GRSP…EELK and LGPQKSPLDPHQGQVGKDHF. Residues 323 to 335 are compositionally biased toward basic residues; sequence SKKKRKAGKQKKG. Positions 336–346 are enriched in basic and acidic residues; sequence HQGEESKEELK. 3 HEAT repeats span residues 460 to 498, 523 to 560, and 566 to 603; these read GIGSPQSVSLMTIALKDSSPKTRACALQVLSAILDGSKQ, SIRELHRCLLLAIVAESSAQTLTQIIKCLANLVSNAPY, and GLLTRVWNQIKPYIRNKDVNVRVSSLTLLGAIVSAQVS. The disordered stretch occupies residues 619 to 648; it reads SQNSGSATPSDPESNRKESMLEGGKKNGLH. Positions 631–648 are enriched in basic and acidic residues; sequence ESNRKESMLEGGKKNGLH.

This chain is HEAT repeat-containing protein 6 (heatr6), found in Xenopus laevis (African clawed frog).